The primary structure comprises 180 residues: ATP-dependent protease subunit HslV (180 aa).

Residue Thr-9 is part of the active site. Na(+) contacts are provided by Ala-164, Cys-167, and Thr-170.

This sequence belongs to the peptidase T1B family. HslV subfamily. A double ring-shaped homohexamer of HslV is capped on each side by a ring-shaped HslU homohexamer. The assembly of the HslU/HslV complex is dependent on binding of ATP.

The protein resides in the cytoplasm. The enzyme catalyses ATP-dependent cleavage of peptide bonds with broad specificity.. With respect to regulation, allosterically activated by HslU binding. In terms of biological role, protease subunit of a proteasome-like degradation complex believed to be a general protein degrading machinery. The chain is ATP-dependent protease subunit HslV from Leptospira interrogans serogroup Icterohaemorrhagiae serovar Lai (strain 56601).